Consider the following 363-residue polypeptide: L-serine dehydratase/L-threonine deaminase (363 aa).

At Ala2 the chain carries N-acetylalanine. Residue Lys41 is modified to N6-(pyridoxal phosphate)lysine. The segment at 74–98 is disordered; that stretch reads RGRSHSGDEQPHVRSQALLPDTPSP. Position 164 (Pro164) interacts with pyridoxal 5'-phosphate.

Belongs to the serine/threonine dehydratase family. In terms of assembly, homodimer. Pyridoxal 5'-phosphate is required as a cofactor. As to expression, predominantly expressed in the periportal regions of the liver.

Its subcellular location is the cytoplasm. The enzyme catalyses L-serine = pyruvate + NH4(+). It carries out the reaction L-threonine = 2-oxobutanoate + NH4(+). The protein operates within carbohydrate biosynthesis; gluconeogenesis. Its function is as follows. Catalyzes the pyridoxal-phosphate-dependent dehydrative deamination of L-threonine and L-serine to ammonia and alpha-ketobutyrate and pyruvate, respectively. The polypeptide is L-serine dehydratase/L-threonine deaminase (Sds) (Rattus norvegicus (Rat)).